A 496-amino-acid polypeptide reads, in one-letter code: Probable cytosol aminopeptidase (496 aa).

Mn(2+) is bound by residues Lys-266 and Asp-271. Lys-278 is a catalytic residue. The Mn(2+) site is built by Asp-289, Asp-348, and Glu-350. Arg-352 is a catalytic residue.

The protein belongs to the peptidase M17 family. It depends on Mn(2+) as a cofactor.

The protein localises to the cytoplasm. The catalysed reaction is Release of an N-terminal amino acid, Xaa-|-Yaa-, in which Xaa is preferably Leu, but may be other amino acids including Pro although not Arg or Lys, and Yaa may be Pro. Amino acid amides and methyl esters are also readily hydrolyzed, but rates on arylamides are exceedingly low.. The enzyme catalyses Release of an N-terminal amino acid, preferentially leucine, but not glutamic or aspartic acids.. Presumably involved in the processing and regular turnover of intracellular proteins. Catalyzes the removal of unsubstituted N-terminal amino acids from various peptides. The polypeptide is Probable cytosol aminopeptidase (Pseudomonas syringae pv. tomato (strain ATCC BAA-871 / DC3000)).